We begin with the raw amino-acid sequence, 295 residues long: Protease HtpX (295 aa).

2 helical membrane-spanning segments follow: residues 4 to 24 (ILLF…TLSL) and 41 to 61 (SQLL…SLFI). His-147 contributes to the Zn(2+) binding site. Residue Glu-148 is part of the active site. His-151 lines the Zn(2+) pocket. The next 2 helical transmembrane spans lie at 158–178 (VTLA…ARII) and 199–219 (IATI…VMWF). Glu-224 is a binding site for Zn(2+).

It belongs to the peptidase M48B family. Requires Zn(2+) as cofactor.

The protein localises to the cell inner membrane. The chain is Protease HtpX from Pseudomonas fluorescens (strain Pf0-1).